We begin with the raw amino-acid sequence, 994 residues long: Alanine--tRNA ligase, chloroplastic/mitochondrial (994 aa).

The segment at 1-29 (MGGLKLPPQTLHGIHGGRRPLTAPSSKPS) is disordered. Zn(2+)-binding residues include His672, His676, Cys774, and His778.

Belongs to the class-II aminoacyl-tRNA synthetase family. Monomer. Zn(2+) is required as a cofactor.

It localises to the plastid. The protein localises to the chloroplast. It is found in the mitochondrion. It catalyses the reaction tRNA(Ala) + L-alanine + ATP = L-alanyl-tRNA(Ala) + AMP + diphosphate. Its function is as follows. Catalyzes the attachment of alanine to tRNA(Ala) in a two-step reaction: alanine is first activated by ATP to form Ala-AMP and then transferred to the acceptor end of tRNA(Ala). Also edits incorrectly charged tRNA(Ala) via its editing domain. This is Alanine--tRNA ligase, chloroplastic/mitochondrial from Populus trichocarpa (Western balsam poplar).